A 138-amino-acid polypeptide reads, in one-letter code: Large ribosomal subunit protein uL16 (138 aa).

Positions methionine 1–glycine 19 are enriched in basic residues. The interval methionine 1–glycine 24 is disordered.

This sequence belongs to the universal ribosomal protein uL16 family. Part of the 50S ribosomal subunit.

In terms of biological role, binds 23S rRNA and is also seen to make contacts with the A and possibly P site tRNAs. The chain is Large ribosomal subunit protein uL16 from Corynebacterium diphtheriae (strain ATCC 700971 / NCTC 13129 / Biotype gravis).